The chain runs to 377 residues: Lipoyl synthase, mitochondrial (377 aa).

A mitochondrion-targeting transit peptide spans 1-77 (MFRRGGRILN…LPNGSVHKRL (77 aa)). Residues C107, C112, C118, C138, C142, C145, and S353 each contribute to the [4Fe-4S] cluster site. Residues 123–342 (DKTRATATIM…RKRAEELGFL (220 aa)) form the Radical SAM core domain.

The protein belongs to the radical SAM superfamily. Lipoyl synthase family. Requires [4Fe-4S] cluster as cofactor.

Its subcellular location is the mitochondrion. The enzyme catalyses [[Fe-S] cluster scaffold protein carrying a second [4Fe-4S](2+) cluster] + N(6)-octanoyl-L-lysyl-[protein] + 2 oxidized [2Fe-2S]-[ferredoxin] + 2 S-adenosyl-L-methionine + 4 H(+) = [[Fe-S] cluster scaffold protein] + N(6)-[(R)-dihydrolipoyl]-L-lysyl-[protein] + 4 Fe(3+) + 2 hydrogen sulfide + 2 5'-deoxyadenosine + 2 L-methionine + 2 reduced [2Fe-2S]-[ferredoxin]. It participates in protein modification; protein lipoylation via endogenous pathway; protein N(6)-(lipoyl)lysine from octanoyl-[acyl-carrier-protein]: step 2/2. Catalyzes the radical-mediated insertion of two sulfur atoms into the C-6 and C-8 positions of the octanoyl moiety bound to the lipoyl domains of lipoate-dependent enzymes, thereby converting the octanoylated domains into lipoylated derivatives. This is Lipoyl synthase, mitochondrial from Schizosaccharomyces japonicus (strain yFS275 / FY16936) (Fission yeast).